The sequence spans 156 residues: tRNA (cytidine(34)-2'-O)-methyltransferase (156 aa).

The S-adenosyl-L-methionine site is built by G102, L124, and S132.

It belongs to the class IV-like SAM-binding methyltransferase superfamily. RNA methyltransferase TrmH family. TrmL subfamily. Homodimer.

It localises to the cytoplasm. It catalyses the reaction cytidine(34) in tRNA + S-adenosyl-L-methionine = 2'-O-methylcytidine(34) in tRNA + S-adenosyl-L-homocysteine + H(+). The enzyme catalyses 5-carboxymethylaminomethyluridine(34) in tRNA(Leu) + S-adenosyl-L-methionine = 5-carboxymethylaminomethyl-2'-O-methyluridine(34) in tRNA(Leu) + S-adenosyl-L-homocysteine + H(+). In terms of biological role, methylates the ribose at the nucleotide 34 wobble position in the two leucyl isoacceptors tRNA(Leu)(CmAA) and tRNA(Leu)(cmnm5UmAA). Catalyzes the methyl transfer from S-adenosyl-L-methionine to the 2'-OH of the wobble nucleotide. The protein is tRNA (cytidine(34)-2'-O)-methyltransferase of Burkholderia ambifaria (strain ATCC BAA-244 / DSM 16087 / CCUG 44356 / LMG 19182 / AMMD) (Burkholderia cepacia (strain AMMD)).